The following is a 433-amino-acid chain: Gamma-glutamyl phosphate reductase (433 aa).

It belongs to the gamma-glutamyl phosphate reductase family.

Its subcellular location is the cytoplasm. The enzyme catalyses L-glutamate 5-semialdehyde + phosphate + NADP(+) = L-glutamyl 5-phosphate + NADPH + H(+). Its pathway is amino-acid biosynthesis; L-proline biosynthesis; L-glutamate 5-semialdehyde from L-glutamate: step 2/2. In terms of biological role, catalyzes the NADPH-dependent reduction of L-glutamate 5-phosphate into L-glutamate 5-semialdehyde and phosphate. The product spontaneously undergoes cyclization to form 1-pyrroline-5-carboxylate. The protein is Gamma-glutamyl phosphate reductase of Rhodopseudomonas palustris (strain BisB18).